Reading from the N-terminus, the 1025-residue chain is Retrovirus-related Pol polyprotein from type-1 retrotransposable element R2 (1025 aa).

Residues Asn-1 to Gly-11 are compositionally biased toward polar residues. Residues Asn-1–Ala-38 form a disordered region. The C2H2-type zinc-finger motif lies at Phe-46–His-69. The span at Asn-146–Thr-158 shows a compositional bias: basic and acidic residues. Positions Asn-146–Asn-172 are disordered. Positions Met-358 to Tyr-635 constitute a Reverse transcriptase domain. The interval Ser-755–Asn-1025 is nucleic acid-binding endonuclease.

The enzyme catalyses DNA(n) + a 2'-deoxyribonucleoside 5'-triphosphate = DNA(n+1) + diphosphate. The sequence is that of Retrovirus-related Pol polyprotein from type-1 retrotransposable element R2 from Nasonia vitripennis (Parasitic wasp).